A 378-amino-acid chain; its full sequence is UPF0754 membrane protein BCQ_0944 (378 aa).

2 helical membrane passes run 1–21 (MNIWLSMLTTTGLGAIIGGFT) and 357–377 (YLGALLGGMIGIVQGLLLLFL).

Belongs to the UPF0754 family.

Its subcellular location is the cell membrane. The sequence is that of UPF0754 membrane protein BCQ_0944 from Bacillus cereus (strain Q1).